Consider the following 83-residue polypeptide: Small ribosomal subunit protein bS20 (83 aa).

This sequence belongs to the bacterial ribosomal protein bS20 family.

In terms of biological role, binds directly to 16S ribosomal RNA. The polypeptide is Small ribosomal subunit protein bS20 (Leuconostoc citreum (strain KM20)).